Consider the following 355-residue polypeptide: Mu-like prophage FluMu I protein (355 aa).

Belongs to the peptidase U35 family.

Its function is as follows. Potential protease involved in virion morphogenesis. The protein is Mu-like prophage FluMu I protein of Haemophilus influenzae (strain ATCC 51907 / DSM 11121 / KW20 / Rd).